We begin with the raw amino-acid sequence, 321 residues long: Glutamyl-Q tRNA(Asp) synthetase (321 aa).

L-glutamate contacts are provided by residues 25-29 (RFAPS) and glutamate 61. Residues 28–38 (PSPSGDLHFGS) carry the 'HIGH' region motif. Zn(2+)-binding residues include cysteine 117, cysteine 119, tyrosine 131, and cysteine 135. L-glutamate contacts are provided by tyrosine 188 and arginine 206. A 'KMSKS' region motif is present at residues 244 to 248 (KLSKQ). Position 247 (lysine 247) interacts with ATP.

The protein belongs to the class-I aminoacyl-tRNA synthetase family. GluQ subfamily. Zn(2+) serves as cofactor.

Functionally, catalyzes the tRNA-independent activation of glutamate in presence of ATP and the subsequent transfer of glutamate onto a tRNA(Asp). Glutamate is transferred on the 2-amino-5-(4,5-dihydroxy-2-cyclopenten-1-yl) moiety of the queuosine in the wobble position of the QUC anticodon. This Yersinia pestis protein is Glutamyl-Q tRNA(Asp) synthetase.